The following is a 952-amino-acid chain: Aminopeptidase 2, mitochondrial (952 aa).

A mitochondrion-targeting transit peptide spans 1–52 (MPIVRWLLLKSAVRGSSLIGKAHPCLRSIAAHPRYLSNVYSPPAGVSRSLRI). Substrate contacts are provided by residues Glu-228 and 360–364 (GAMEN). N-linked (GlcNAc...) asparagine glycosylation occurs at Asn-381. His-396 is a binding site for Zn(2+). Glu-397 serves as the catalytic Proton acceptor. 2 residues coordinate Zn(2+): His-400 and Glu-419. The N-linked (GlcNAc...) asparagine glycan is linked to Asn-713.

This sequence belongs to the peptidase M1 family. Zn(2+) is required as a cofactor.

It localises to the periplasm. Its subcellular location is the cytoplasm. The protein resides in the mitochondrion. Functionally, involved in the cellular supply of leucine from externally offered leucine-containing dipeptide substrates. This is Aminopeptidase 2, mitochondrial (APE2) from Saccharomyces cerevisiae (strain ATCC 204508 / S288c) (Baker's yeast).